The sequence spans 175 residues: MTTIITVRKGGKVVMAGDGQVSLGQTVMKGNARKVRRIGKGDVIAGFAGATADAFTLLERLEKKLEQYPGQLMRAAVELAKDWRTDKYLRNLEAMMLVADKSITLAITGNGDVLEPEHGTTAIGSGGNFAFAAARALMDTDKPAEEIARRALDIAADICVYTNHNIVVELLDVES.

Threonine 2 is an active-site residue. Na(+) contacts are provided by alanine 156, cysteine 159, and threonine 162.

Belongs to the peptidase T1B family. HslV subfamily. In terms of assembly, a double ring-shaped homohexamer of HslV is capped on each side by a ring-shaped HslU homohexamer. The assembly of the HslU/HslV complex is dependent on binding of ATP.

The protein localises to the cytoplasm. It catalyses the reaction ATP-dependent cleavage of peptide bonds with broad specificity.. With respect to regulation, allosterically activated by HslU binding. Its function is as follows. Protease subunit of a proteasome-like degradation complex believed to be a general protein degrading machinery. The protein is ATP-dependent protease subunit HslV of Rhizobium etli (strain ATCC 51251 / DSM 11541 / JCM 21823 / NBRC 15573 / CFN 42).